A 342-amino-acid polypeptide reads, in one-letter code: uncharacterized protein (342 aa).

The next 3 helical transmembrane spans lie at 35–55 (YFRV…WCFS), 134–154 (LLFL…IIYF), and 161–180 (LFIT…YCFS). Disordered regions lie at residues 198–220 (SSDN…QQYN) and 311–342 (IINN…NYTN).

It localises to the membrane. This is an uncharacterized protein from Dictyostelium discoideum (Social amoeba).